The following is a 199-amino-acid chain: Recombination protein RecR (199 aa).

A C4-type zinc finger spans residues cysteine 58–cysteine 73. The region spanning threonine 81–proline 176 is the Toprim domain.

Belongs to the RecR family.

May play a role in DNA repair. It seems to be involved in an RecBC-independent recombinational process of DNA repair. It may act with RecF and RecO. The sequence is that of Recombination protein RecR from Ruminiclostridium cellulolyticum (strain ATCC 35319 / DSM 5812 / JCM 6584 / H10) (Clostridium cellulolyticum).